The sequence spans 452 residues: Peptidoglycan DL-endopeptidase CwlO (452 aa).

An N-terminal signal peptide occupies residues 1–30 (MKKKVYTFGLASILGTASLFTPFMNNTASA). Residues 28–38 (ASAETSQQKQE) show a composition bias toward polar residues. 2 disordered regions span residues 28–53 (ASAE…IESK) and 258–317 (AAAA…GSVV). Basic and acidic residues-rich tracts occupy residues 39 to 53 (IQQK…IESK) and 263 to 275 (KAKE…EKSD). The segment covering 276 to 317 (SGSSSSSNSGSVSKSDGSSNSGSSSSKKSSSPSRNYSSGSVV) has biased composition (low complexity). Positions 321 to 450 (GNAIEAAIST…KAFNGVVRRV (130 aa)) constitute a NlpC/P60 domain. The Nucleophile role is filled by Cys-358. His-410 acts as the Proton acceptor in catalysis. Asn-422 is a catalytic residue.

The protein belongs to the peptidase C40 family.

The protein localises to the secreted. Its function is as follows. Shows a cell wall hydrolytic DL-endopeptidase activity. The polypeptide is Peptidoglycan DL-endopeptidase CwlO (cwlO) (Bacillus licheniformis (strain ATCC 14580 / DSM 13 / JCM 2505 / CCUG 7422 / NBRC 12200 / NCIMB 9375 / NCTC 10341 / NRRL NRS-1264 / Gibson 46)).